A 219-amino-acid chain; its full sequence is Ribose-5-phosphate isomerase A (219 aa).

Substrate is bound by residues 28–31 (SGST), 81–84 (DGAD), and 94–97 (KGGG). Catalysis depends on E103, which acts as the Proton acceptor. A substrate-binding site is contributed by K121.

The protein belongs to the ribose 5-phosphate isomerase family. In terms of assembly, homodimer.

The enzyme catalyses aldehydo-D-ribose 5-phosphate = D-ribulose 5-phosphate. It participates in carbohydrate degradation; pentose phosphate pathway; D-ribose 5-phosphate from D-ribulose 5-phosphate (non-oxidative stage): step 1/1. Catalyzes the reversible conversion of ribose-5-phosphate to ribulose 5-phosphate. The polypeptide is Ribose-5-phosphate isomerase A (Haemophilus influenzae (strain PittGG)).